The primary structure comprises 461 residues: Glutamate-gated chloride channel alpha (461 aa).

The signal sequence occupies residues 1–20 (MATWIVGKLIIASLILGIQA). Over 21–275 (QQARTKSQDI…TTIQLKREFS (255 aa)) the chain is Extracellular. L-glutamate is bound by residues Arg-98, Arg-117, and Ser-182. A disulfide bridge links Cys-191 with Cys-205. Residue Ser-211 coordinates L-glutamate. N-linked (GlcNAc...) asparagine glycosylation occurs at Asn-246. A disulfide bridge links Cys-252 with Cys-263. Residues 276 to 298 (FYLLQLYIPSCMLVIVSWVSFWF) form a helical membrane-spanning segment. The Cytoplasmic portion of the chain corresponds to 299-303 (DRTAI). Residues 304 to 325 (PARVTLGVTTLLTMTAQSAGIN) form a helical membrane-spanning segment. At 326 to 332 (SQLPPVS) the chain is on the extracellular side. The helical transmembrane segment at 333-353 (YIKAIDVWIGACMTFIFCALL) threads the bilayer. The Cytoplasmic segment spans residues 354–432 (EFALVNHIAN…EWNDISKRVD (79 aa)). Residues 433 to 454 (LISRALFPVLFFVFNILYWSRF) form a helical membrane-spanning segment. Topologically, residues 455–461 (GQQNVLF) are extracellular.

The protein belongs to the ligand-gated ion channel (TC 1.A.9) family. Glutamate-gated chloride channel (TC 1.A.9.4) subfamily. In terms of assembly, pentamer. Homooligomer, forms functional heterooligomers with glc-2.

It is found in the postsynaptic cell membrane. The protein resides in the cell membrane. Its function is as follows. Glutamate-gated chloride channel subunit; channel properties depend on the subunit composition. Glutamate binding triggers a rapidly reversible current in heteromeric channels formed by glc-1 and glc-2, while the anti-helmintic drug ivermectin and other avermectins trigger a permanently open channel configuration. Channels containing only glc-1 are activated by ivermectin, but not by glutamate alone (in vitro). The heteromeric channel formed by glc-1 and glc-2 is also activated by ibotenate, and it is blocked by picrotoxin and flufenamic acid. Plays a role in the regulation of locomotor behavior. This chain is Glutamate-gated chloride channel alpha, found in Caenorhabditis elegans.